The following is a 359-amino-acid chain: Peptide chain release factor 1 (359 aa).

Q233 is subject to N5-methylglutamine.

This sequence belongs to the prokaryotic/mitochondrial release factor family. In terms of processing, methylated by PrmC. Methylation increases the termination efficiency of RF1.

The protein localises to the cytoplasm. Its function is as follows. Peptide chain release factor 1 directs the termination of translation in response to the peptide chain termination codons UAG and UAA. The protein is Peptide chain release factor 1 of Orientia tsutsugamushi (strain Boryong) (Rickettsia tsutsugamushi).